The following is a 1399-amino-acid chain: MKDLLNLLKNQGQVEEFDAIRIGLASPEMIRSWSFGEVKKPETINYRTFKPERDGLFCAKIFGPVKDYECLCGKYKRLKHRGVICEKCGVEVALAKVRRERMAHIELASPVAHIWFLKSLPSRIGLLMDMTLRDIERVLYFESYVVIDPGMTTLEKGQLLNDEQYFEALEEFGDDFDARMGAEAVRELLHAIDLEHEIGRLREEIPQTNSETKIKKLSKRLKLMEAFQGSGNLPEWMVLTVLPVLPPDLRPLVPLDGGRFATSDLNDLYRRVINRNNRLKRLLDLSAPDIIVRNEKRMLQEAVDALLDNGRRGRAITGSNKRPLKSLADMIKGKQGRFRQNLLGKRVDYSGRSVITVGPTLRLHQCGLPKKMALELFKPFIFGKLEMRGLATTIKAAKKMVERELPEVWDVLAEVIREHPVLLNRAPTLHRLGIQAFEPVLIEGKAIQLHPLVCAAYNADFDGDQMAVHVPLTLEAQLEARALMMSTNNILSPANGEPIIVPSQDVVLGLYYMTREAINAKGEGRVFADLQEVDRVFRAGEAALHAKIKVRINETVKDRDGSITKNTRIVDTTVGRALLFQVVPAGLPYDVVNQPMKKKAISKLINQCYRVVGLKETVIFADQLMYTGFAYSTISGVSIGVNDFVIPDEKARIIGSATDEVKEIESQYASGLVTQGEKYNKVIDLWSKANDEVSKAMMANLSKEKVIDREGKEVEQESFNSMYMMADSGARGSAAQIRQLAGMRGLMAKPDGSIIETPITANFREGLSVLQYFISTHGARKGLADTALKTANSGYLTRRLVDVAQDLVVTEIDCGTDHGLLMTPHIEGGDVVEPLGERVLGRVIARDVFKPGTEDVIVPAGTLVDEQWVEFIELNSIDEVVVRSPINCETRYGICAKCYGRDLARGHQVNIGEAVGVIAAQSIGEPGTQLTMRTFHIGGAASRTSAADSVQVKNGGMVRLHNLKQVERADGNLVAVSRSGELAIADEFGRERERYKLPYGAVISVKEGDKVEAGAIVAKWDPHTHPIVTELKGTVTFVGMEENITIKRQTDELTGLTNIEVLDVKDRPAAGKEIRPAIKMVDANGKDLYLPGTDVPAQYFLPANALVGVADGAQIGVGDVIARIPQETSKTRDITGGLPRVADLFEARRPKEASILAEVSGTIAFGKETKGKRRLVITPTDGSDPYEELIPKWRHLNVFEGEQVNRGEVISDGPSDPHDILRLLGVSALAKYIVNEIQDVYRLQGVKINDKHIETILRQMLRKVEISESGDSSFIKGDQMELTQVLVENERLAADDKFVSKFTRVLLGITKASLSTESFISAASFQETTRVLTEAAVTGKRDYLRGLKENVVVGRLIPAGTGLAYHSERKRRRDADKPLRVSASEVEAALTEALNSSGN.

Cysteine 70, cysteine 72, cysteine 85, and cysteine 88 together coordinate Zn(2+). Residues aspartate 460, aspartate 462, and aspartate 464 each contribute to the Mg(2+) site. 4 residues coordinate Zn(2+): cysteine 814, cysteine 888, cysteine 895, and cysteine 898.

Belongs to the RNA polymerase beta' chain family. The RNAP catalytic core consists of 2 alpha, 1 beta, 1 beta' and 1 omega subunit. When a sigma factor is associated with the core the holoenzyme is formed, which can initiate transcription. Mg(2+) serves as cofactor. It depends on Zn(2+) as a cofactor.

The enzyme catalyses RNA(n) + a ribonucleoside 5'-triphosphate = RNA(n+1) + diphosphate. In terms of biological role, DNA-dependent RNA polymerase catalyzes the transcription of DNA into RNA using the four ribonucleoside triphosphates as substrates. This is DNA-directed RNA polymerase subunit beta' from Pseudomonas putida (strain W619).